Reading from the N-terminus, the 118-residue chain is Co-chaperonin GroES (118 aa).

Belongs to the GroES chaperonin family. In terms of assembly, heptamer of 7 subunits arranged in a ring. Interacts with the chaperonin GroEL.

The protein localises to the cytoplasm. Its function is as follows. Together with the chaperonin GroEL, plays an essential role in assisting protein folding. The GroEL-GroES system forms a nano-cage that allows encapsulation of the non-native substrate proteins and provides a physical environment optimized to promote and accelerate protein folding. GroES binds to the apical surface of the GroEL ring, thereby capping the opening of the GroEL channel. The polypeptide is Co-chaperonin GroES (Helicobacter pylori (strain HPAG1)).